Here is a 106-residue protein sequence, read N- to C-terminus: Large ribosomal subunit protein eL36 (106 aa).

Over residues 75 to 93 the composition is skewed to basic and acidic residues; sequence VRQEKVGHSQESKEEERGD. Residues 75–106 are disordered; sequence VRQEKVGHSQESKEEERGDVQCSPPDEGWWWY.

Belongs to the eukaryotic ribosomal protein eL36 family.

This Daucus carota (Wild carrot) protein is Large ribosomal subunit protein eL36 (RPL36).